A 423-amino-acid polypeptide reads, in one-letter code: Histidine--tRNA ligase (423 aa).

It belongs to the class-II aminoacyl-tRNA synthetase family. As to quaternary structure, homodimer.

Its subcellular location is the cytoplasm. It catalyses the reaction tRNA(His) + L-histidine + ATP = L-histidyl-tRNA(His) + AMP + diphosphate + H(+). The sequence is that of Histidine--tRNA ligase from Laribacter hongkongensis (strain HLHK9).